The primary structure comprises 462 residues: ATP synthase subunit beta (462 aa).

ATP is bound at residue 151-158 (GGAGVGKT).

The protein belongs to the ATPase alpha/beta chains family. F-type ATPases have 2 components, CF(1) - the catalytic core - and CF(0) - the membrane proton channel. CF(1) has five subunits: alpha(3), beta(3), gamma(1), delta(1), epsilon(1). CF(0) has four main subunits: a(1), b(1), b'(1) and c(9-12).

Its subcellular location is the cell inner membrane. It catalyses the reaction ATP + H2O + 4 H(+)(in) = ADP + phosphate + 5 H(+)(out). Produces ATP from ADP in the presence of a proton gradient across the membrane. The catalytic sites are hosted primarily by the beta subunits. This is ATP synthase subunit beta from Chlorobium phaeobacteroides (strain DSM 266 / SMG 266 / 2430).